Consider the following 25-residue polypeptide: ATP synthase subunit alpha, mitochondrial (25 aa).

It belongs to the ATPase alpha/beta chains family. As to quaternary structure, F-type ATPases have 2 components, CF(1) - the catalytic core - and CF(0) - the membrane proton channel. CF(1) has five subunits: alpha(3), beta(3), gamma(1), delta(1), epsilon(1). CF(0) has three main subunits: a, b and c.

It is found in the mitochondrion. The protein localises to the mitochondrion inner membrane. In terms of biological role, mitochondrial membrane ATP synthase (F(1)F(0) ATP synthase or Complex V) produces ATP from ADP in the presence of a proton gradient across the membrane which is generated by electron transport complexes of the respiratory chain. F-type ATPases consist of two structural domains, F(1) - containing the extramembraneous catalytic core, and F(0) - containing the membrane proton channel, linked together by a central stalk and a peripheral stalk. During catalysis, ATP synthesis in the catalytic domain of F(1) is coupled via a rotary mechanism of the central stalk subunits to proton translocation. Subunits alpha and beta form the catalytic core in F(1). Rotation of the central stalk against the surrounding alpha(3)beta(3) subunits leads to hydrolysis of ATP in three separate catalytic sites on the beta subunits. Subunit alpha does not bear the catalytic high-affinity ATP-binding sites. This chain is ATP synthase subunit alpha, mitochondrial (ATPA), found in Spinacia oleracea (Spinach).